We begin with the raw amino-acid sequence, 209 residues long: MKLIIQDGKEEDHLQVLNKQLEIGIDEVGRGAVFGPVFSAAVVLTEKNGYTLKQLGVTDSKKLTEKKRKLLLPKIISLSSDYSLGQSSAREIDQLGIRYATELSMIRAIKKLKSKPYEVIIDGPLSLRLWKSHQRNIIAGDSKFTSIAAASIVAKVTRDFLMERLEKKFSGYFIFKNKGYGTKEHLLSLKANGVTNLHRKSFLTKLNLI.

Positions 20 to 209 constitute an RNase H type-2 domain; the sequence is QLEIGIDEVG…KSFLTKLNLI (190 aa). Residues aspartate 26, glutamate 27, and aspartate 122 each contribute to the a divalent metal cation site.

This sequence belongs to the RNase HII family. It depends on Mn(2+) as a cofactor. Requires Mg(2+) as cofactor.

The protein localises to the cytoplasm. It carries out the reaction Endonucleolytic cleavage to 5'-phosphomonoester.. In terms of biological role, endonuclease that specifically degrades the RNA of RNA-DNA hybrids. This chain is Ribonuclease HII, found in Prochlorococcus marinus (strain MIT 9515).